The following is a 200-amino-acid chain: Glycerol-3-phosphate acyltransferase (200 aa).

The next 4 membrane-spanning stretches (helical) occupy residues 4-24, 70-90, 110-130, and 158-178; these read ALLA…YWVG, ALGS…FAVI, LGIL…VWLL, and QPLP…GAHR.

This sequence belongs to the PlsY family. As to quaternary structure, probably interacts with PlsX.

Its subcellular location is the cell inner membrane. The enzyme catalyses an acyl phosphate + sn-glycerol 3-phosphate = a 1-acyl-sn-glycero-3-phosphate + phosphate. The protein operates within lipid metabolism; phospholipid metabolism. In terms of biological role, catalyzes the transfer of an acyl group from acyl-phosphate (acyl-PO(4)) to glycerol-3-phosphate (G3P) to form lysophosphatidic acid (LPA). This enzyme utilizes acyl-phosphate as fatty acyl donor, but not acyl-CoA or acyl-ACP. This chain is Glycerol-3-phosphate acyltransferase, found in Synechococcus sp. (strain JA-2-3B'a(2-13)) (Cyanobacteria bacterium Yellowstone B-Prime).